We begin with the raw amino-acid sequence, 55 residues long: Cop-6 protein (55 aa).

This sequence belongs to the transcriptional regulatory CopG/NikR family.

In terms of biological role, acts in trans as a negative regulatory element in pE194 replication. This is Cop-6 protein from Staphylococcus aureus.